We begin with the raw amino-acid sequence, 873 residues long: Bifunctional levopimaradiene synthase, chloroplastic (873 aa).

The transit peptide at methionine 1–histidine 59 directs the protein to the chloroplast. Residue lysine 271 coordinates substrate. Aspartate 405 and aspartate 407 together coordinate Mg(2+). The DXDD motif motif lies at aspartate 405–aspartate 408. Lysine 492 contributes to the substrate binding site. 5 residues coordinate Mg(2+): aspartate 624, aspartate 628, asparagine 769, threonine 773, and glutamate 777. Positions aspartate 624–aspartate 628 match the DDXXD motif motif.

It belongs to the terpene synthase family. Tpsd subfamily. Mg(2+) serves as cofactor. In terms of tissue distribution, expressed in roots.

Its subcellular location is the plastid. The protein localises to the chloroplast. It carries out the reaction (2E,6E,10E)-geranylgeranyl diphosphate = (+)-copalyl diphosphate. It catalyses the reaction (+)-copalyl diphosphate = abieta-8(14),12-diene + diphosphate. The protein operates within terpene metabolism; ginkgolide biosynthesis. Its function is as follows. Catalyzes the initial cyclization step in the biosynthesis of ginkgolides, a structurally unique family of diterpenoids that are highly specific platelet-activating-factor receptor antagonists. Bifunctional enzyme that catalyzes two sequential cyclizations of geranylgeranyl diphosphate (GGPP) to levopimaradiene. The chain is Bifunctional levopimaradiene synthase, chloroplastic (LPS) from Ginkgo biloba (Ginkgo).